Consider the following 93-residue polypeptide: Alpha-defensin 15 (93 aa).

An N-terminal signal peptide occupies residues 1–19 (MKTLVLLSALVLLAFQVQA). Positions 20–58 (DPIQNTDEETKTEEQPGEDDQAVSVSFGDPEGSSLQEES) are excised as a propeptide. The interval 23–56 (QNTDEETKTEEQPGEDDQAVSVSFGDPEGSSLQE) is disordered. Cystine bridges form between Cys-64/Cys-92, Cys-66/Cys-81, and Cys-71/Cys-91.

It belongs to the alpha-defensin family. In terms of tissue distribution, paneth cells of the small bowel.

Its subcellular location is the secreted. In terms of biological role, probably contributes to the antimicrobial barrier function of the small bowel mucosa. This chain is Alpha-defensin 15 (Defa15), found in Mus musculus (Mouse).